We begin with the raw amino-acid sequence, 391 residues long: GTPase Obg (391 aa).

One can recognise an Obg domain in the interval 1-159 (MKFVDEAVVK…REIRLELLLL (159 aa)). The OBG-type G domain maps to 160 to 333 (ADVGMLGLPN…LCYKLADFME (174 aa)). GTP is bound by residues 166 to 173 (GLPNAGKS), 191 to 195 (FTTLI), 213 to 216 (DIPG), 283 to 286 (NKTD), and 314 to 316 (SAI). Mg(2+)-binding residues include Ser173 and Thr193. Residues 367 to 383 (TEEDDDDWDDCDDEDDD) are compositionally biased toward acidic residues. The interval 367–391 (TEEDDDDWDDCDDEDDDGHVVYVRD) is disordered.

This sequence belongs to the TRAFAC class OBG-HflX-like GTPase superfamily. OBG GTPase family. Monomer. Mg(2+) serves as cofactor.

Its subcellular location is the cytoplasm. Its function is as follows. An essential GTPase which binds GTP, GDP and possibly (p)ppGpp with moderate affinity, with high nucleotide exchange rates and a fairly low GTP hydrolysis rate. Plays a role in control of the cell cycle, stress response, ribosome biogenesis and in those bacteria that undergo differentiation, in morphogenesis control. The sequence is that of GTPase Obg from Vibrio campbellii (strain ATCC BAA-1116).